We begin with the raw amino-acid sequence, 393 residues long: 4-hydroxyphenylpyruvate dioxygenase (393 aa).

Residue Thr-2 is modified to N-acetylthreonine. VOC domains are found at residues 18-149 and 180-338; these read HFHS…LVEK and IIDH…IFTK. At Lys-132 the chain carries N6-succinyllysine. Position 183 (His-183) interacts with Fe cation. Residues Ser-211, Ser-226, and Ser-250 each carry the phosphoserine modification. Residues His-266 and Glu-349 each coordinate Fe cation.

Belongs to the 4HPPD family. As to quaternary structure, homodimer. Fe cation serves as cofactor.

The protein resides in the cytoplasm. Its subcellular location is the endoplasmic reticulum membrane. The protein localises to the golgi apparatus membrane. The enzyme catalyses 3-(4-hydroxyphenyl)pyruvate + O2 = homogentisate + CO2. It participates in amino-acid degradation; L-phenylalanine degradation; acetoacetate and fumarate from L-phenylalanine: step 3/6. Catalyzes the conversion of 4-hydroxyphenylpyruvic acid to homogentisic acid, one of the steps in tyrosine catabolism. The chain is 4-hydroxyphenylpyruvate dioxygenase (HPD) from Bos taurus (Bovine).